The primary structure comprises 129 residues: uncharacterized protein (129 aa).

It belongs to the asfivirus C129R family.

It is found in the virion. Its function is as follows. Plays a role in the inhibition of type I interferon signaling pathway. Mechanistically, specifically interacts with 2',3'-cGAMP and cleaves it via its phosphodiesterase activity. In turn, prevents 2',3'-cGAMP interaction with host ER-resident STING1 leading to inhibition of downstream signaling pathway and type I interferon production. This is an uncharacterized protein from Ornithodoros (relapsing fever ticks).